A 101-amino-acid chain; its full sequence is Small ribosomal subunit protein uS14 (101 aa).

The protein belongs to the universal ribosomal protein uS14 family. In terms of assembly, part of the 30S ribosomal subunit. Contacts proteins S3 and S10.

Its function is as follows. Binds 16S rRNA, required for the assembly of 30S particles and may also be responsible for determining the conformation of the 16S rRNA at the A site. This chain is Small ribosomal subunit protein uS14, found in Acinetobacter baylyi (strain ATCC 33305 / BD413 / ADP1).